Consider the following 233-residue polypeptide: tRNA1(Val) (adenine(37)-N6)-methyltransferase (233 aa).

Belongs to the methyltransferase superfamily. tRNA (adenine-N(6)-)-methyltransferase family.

The protein localises to the cytoplasm. It carries out the reaction adenosine(37) in tRNA1(Val) + S-adenosyl-L-methionine = N(6)-methyladenosine(37) in tRNA1(Val) + S-adenosyl-L-homocysteine + H(+). Specifically methylates the adenine in position 37 of tRNA(1)(Val) (anticodon cmo5UAC). This Shewanella amazonensis (strain ATCC BAA-1098 / SB2B) protein is tRNA1(Val) (adenine(37)-N6)-methyltransferase.